Reading from the N-terminus, the 1969-residue chain is Cytadherence high molecular weight protein 1 (1969 aa).

The stretch at 148–166 (YYDENEEWVWTGYFDEDNK) is one HAT 1 repeat. The interval 174-244 (KPAEVEALEE…QPESEQEGSG (71 aa)) is disordered. Composition is skewed to acidic residues over residues 179-207 (EALE…EVVE) and 214-242 (QPEE…EQEG). HAT repeat units follow at residues 258–278 (YYDE…NNFV), 300–331 (AQQE…VEGY), and 333–353 (YYDE…NNFV). A disordered region spans residues 294–319 (QVEEYSAQQEQVQEEYEQQPEQEGSG). Positions 365–393 (VSEEQYSESVSEEQEPASEEQVAEEPAQV) are disordered. Residues 374–387 (VSEEQEPASEEQVA) show a composition bias toward acidic residues. HAT repeat units follow at residues 477-497 (YYDE…GMFI) and 959-997 (LTLV…DQNN). The stretch at 1000-1027 (SDKDSKTQKVDQLIEEFNKQEAIKKTEE) forms a coiled coil. An HAT 7 repeat occupies 1029–1067 (EAKKASEPFYNKYIGNKQFGYYNDKNVWIWNGYFDENDQ). 3 coiled-coil regions span residues 1082–1190 (IEDE…FDNF), 1547–1621 (SVNQ…LALT), and 1758–1790 (NRGD…NKKV).

It localises to the cell projection. The protein localises to the attachment organelle membrane. Component of the cytoskeleton-like structure which stabilizes the shape of the wall-less Mycoplasma. This cytoskeleton-like network of accessory proteins containing HMW proteins 1 to 5 allows the proper anchoring of cytadhesin proteins in the mycoplasmal membrane at the attachment organelle. The chain is Cytadherence high molecular weight protein 1 (hlp1) from Mycoplasmoides gallisepticum (strain R(low / passage 15 / clone 2)) (Mycoplasma gallisepticum).